The sequence spans 138 residues: Small ribosomal subunit protein uS9 (138 aa).

The interval 99 to 138 (DPDNRPPLKTEGYLTRDPRAKERKKYGLHKARKAPQYSKR) is disordered. Residues 100-118 (PDNRPPLKTEGYLTRDPRA) are compositionally biased toward basic and acidic residues. Positions 119-138 (KERKKYGLHKARKAPQYSKR) are enriched in basic residues.

It belongs to the universal ribosomal protein uS9 family.

The chain is Small ribosomal subunit protein uS9 from Nostoc punctiforme (strain ATCC 29133 / PCC 73102).